The following is a 186-amino-acid chain: NADH dehydrogenase [ubiquinone] 1 beta subcomplex subunit 8, mitochondrial (186 aa).

Residues 1 to 28 (MAVARAGVLGVQWLQRASRNVMPLGART) constitute a mitochondrion transit peptide. A helical membrane pass occupies residues 133–153 (LFGFLAFMIFMCWVGDVYPVY).

This sequence belongs to the complex I NDUFB8 subunit family. In terms of assembly, complex I is composed of 45 different subunits.

It localises to the mitochondrion inner membrane. Its function is as follows. Accessory subunit of the mitochondrial membrane respiratory chain NADH dehydrogenase (Complex I), that is believed not to be involved in catalysis. Complex I functions in the transfer of electrons from NADH to the respiratory chain. The immediate electron acceptor for the enzyme is believed to be ubiquinone. The chain is NADH dehydrogenase [ubiquinone] 1 beta subcomplex subunit 8, mitochondrial (NDUFB8) from Homo sapiens (Human).